Consider the following 285-residue polypeptide: DNA repair protein RecO (285 aa).

The protein belongs to the RecO family.

Functionally, involved in DNA repair and RecF pathway recombination. The chain is DNA repair protein RecO from Synechococcus sp. (strain JA-2-3B'a(2-13)) (Cyanobacteria bacterium Yellowstone B-Prime).